The sequence spans 440 residues: Ribosomal protein uS12 methylthiotransferase RimO (440 aa).

The 118-residue stretch at 8-125 folds into the MTTase N-terminal domain; it reads LRCHAISLGC…WNEQILLALN (118 aa). [4Fe-4S] cluster is bound by residues cysteine 17, cysteine 52, cysteine 87, cysteine 152, cysteine 156, and cysteine 159. Positions 138-368 constitute a Radical SAM core domain; sequence TTGKSYAWLK…MEIQLKISEK (231 aa). Residues 371–439 enclose the TRAM domain; the sequence is KNFVGKRLSL…SYDLVALADS (69 aa).

It belongs to the methylthiotransferase family. RimO subfamily. Requires [4Fe-4S] cluster as cofactor.

It is found in the cytoplasm. The catalysed reaction is L-aspartate(89)-[ribosomal protein uS12]-hydrogen + (sulfur carrier)-SH + AH2 + 2 S-adenosyl-L-methionine = 3-methylsulfanyl-L-aspartate(89)-[ribosomal protein uS12]-hydrogen + (sulfur carrier)-H + 5'-deoxyadenosine + L-methionine + A + S-adenosyl-L-homocysteine + 2 H(+). In terms of biological role, catalyzes the methylthiolation of an aspartic acid residue of ribosomal protein uS12. The polypeptide is Ribosomal protein uS12 methylthiotransferase RimO (Lawsonia intracellularis (strain PHE/MN1-00)).